The following is a 308-amino-acid chain: Quinolinate synthase (308 aa).

Residues His-24 and Ser-41 each contribute to the iminosuccinate site. Cys-86 is a binding site for [4Fe-4S] cluster. Residues 112–114 and Ser-129 contribute to the iminosuccinate site; that span reads YIN. Cys-172 provides a ligand contact to [4Fe-4S] cluster. Residues 198-200 and Thr-215 contribute to the iminosuccinate site; that span reads HPE. Cys-265 serves as a coordination point for [4Fe-4S] cluster.

Belongs to the quinolinate synthase family. Type 2 subfamily. [4Fe-4S] cluster is required as a cofactor.

The protein resides in the cytoplasm. The enzyme catalyses iminosuccinate + dihydroxyacetone phosphate = quinolinate + phosphate + 2 H2O + H(+). Its pathway is cofactor biosynthesis; NAD(+) biosynthesis; quinolinate from iminoaspartate: step 1/1. Catalyzes the condensation of iminoaspartate with dihydroxyacetone phosphate to form quinolinate. In Sulfurihydrogenibium sp. (strain YO3AOP1), this protein is Quinolinate synthase.